Consider the following 285-residue polypeptide: NADPH-dependent 7-cyano-7-deazaguanine reductase (285 aa).

80–82 (VES) contacts substrate. NADPH is bound at residue 82–83 (SK). The active-site Thioimide intermediate is cysteine 191. The active-site Proton donor is the aspartate 198. 231-232 (HE) is a substrate binding site. Position 260–261 (260–261 (RG)) interacts with NADPH.

This sequence belongs to the GTP cyclohydrolase I family. QueF type 2 subfamily. Homodimer.

It localises to the cytoplasm. The enzyme catalyses 7-aminomethyl-7-carbaguanine + 2 NADP(+) = 7-cyano-7-deazaguanine + 2 NADPH + 3 H(+). It participates in tRNA modification; tRNA-queuosine biosynthesis. In terms of biological role, catalyzes the NADPH-dependent reduction of 7-cyano-7-deazaguanine (preQ0) to 7-aminomethyl-7-deazaguanine (preQ1). This Psychrobacter arcticus (strain DSM 17307 / VKM B-2377 / 273-4) protein is NADPH-dependent 7-cyano-7-deazaguanine reductase.